Consider the following 340-residue polypeptide: tRNA dimethylallyltransferase (340 aa).

Residues 1-25 form a disordered region; that stretch reads MDQNRSPNGRDCREPPSPSSTARPG. 31-38 is a binding site for ATP; sequence GPTATGKS. 33–38 serves as a coordination point for substrate; the sequence is TATGKS. Residues 56–59 form an interaction with substrate tRNA region; sequence DSRQ.

It belongs to the IPP transferase family. Monomer. The cofactor is Mg(2+).

The enzyme catalyses adenosine(37) in tRNA + dimethylallyl diphosphate = N(6)-dimethylallyladenosine(37) in tRNA + diphosphate. Catalyzes the transfer of a dimethylallyl group onto the adenine at position 37 in tRNAs that read codons beginning with uridine, leading to the formation of N6-(dimethylallyl)adenosine (i(6)A). The polypeptide is tRNA dimethylallyltransferase (Synechococcus sp. (strain JA-3-3Ab) (Cyanobacteria bacterium Yellowstone A-Prime)).